Here is a 521-residue protein sequence, read N- to C-terminus: Bifunctional purine biosynthesis protein PurH (521 aa).

The MGS-like domain occupies 1–147; sequence MAKISRALIS…KNNADVTVLV (147 aa).

This sequence belongs to the PurH family.

It catalyses the reaction (6R)-10-formyltetrahydrofolate + 5-amino-1-(5-phospho-beta-D-ribosyl)imidazole-4-carboxamide = 5-formamido-1-(5-phospho-D-ribosyl)imidazole-4-carboxamide + (6S)-5,6,7,8-tetrahydrofolate. The catalysed reaction is IMP + H2O = 5-formamido-1-(5-phospho-D-ribosyl)imidazole-4-carboxamide. It participates in purine metabolism; IMP biosynthesis via de novo pathway; 5-formamido-1-(5-phospho-D-ribosyl)imidazole-4-carboxamide from 5-amino-1-(5-phospho-D-ribosyl)imidazole-4-carboxamide (10-formyl THF route): step 1/1. It functions in the pathway purine metabolism; IMP biosynthesis via de novo pathway; IMP from 5-formamido-1-(5-phospho-D-ribosyl)imidazole-4-carboxamide: step 1/1. This Geotalea daltonii (strain DSM 22248 / JCM 15807 / FRC-32) (Geobacter daltonii) protein is Bifunctional purine biosynthesis protein PurH.